The primary structure comprises 139 residues: D-ribose pyranase (139 aa).

Catalysis depends on histidine 20, which acts as the Proton donor. Substrate-binding positions include aspartate 28, histidine 106, and 128–130 (YAN).

This sequence belongs to the RbsD / FucU family. RbsD subfamily. In terms of assembly, homodecamer.

Its subcellular location is the cytoplasm. It catalyses the reaction beta-D-ribopyranose = beta-D-ribofuranose. The protein operates within carbohydrate metabolism; D-ribose degradation; D-ribose 5-phosphate from beta-D-ribopyranose: step 1/2. Catalyzes the interconversion of beta-pyran and beta-furan forms of D-ribose. The sequence is that of D-ribose pyranase from Glaesserella parasuis serovar 5 (strain SH0165) (Haemophilus parasuis).